The following is a 216-amino-acid chain: 1-Cys peroxiredoxin PER1 (216 aa).

Residues Ile-4 to Met-159 form the Thioredoxin domain. The active-site Cysteine sulfenic acid (-SOH) intermediate is Cys-46. A Bipartite nuclear localization signal motif is present at residues Lys-191 to Glu-214.

It belongs to the peroxiredoxin family. Prx6 subfamily. Predominantly expressed in seed. Expressed in endosperm, embryo and aleurone cells. Also detected in young seedlings, abscission zones, stem branching points.

Its subcellular location is the nucleus. It is found in the cytoplasm. It carries out the reaction a hydroperoxide + [thioredoxin]-dithiol = an alcohol + [thioredoxin]-disulfide + H2O. Its function is as follows. Thiol-specific peroxidase that catalyzes the reduction of hydrogen peroxide and organic hydroperoxides to water and alcohols, respectively. Seems to contribute to the inhibition of germination during stress. The sequence is that of 1-Cys peroxiredoxin PER1 (PER1) from Arabidopsis thaliana (Mouse-ear cress).